An 88-amino-acid chain; its full sequence is Large ribosomal subunit protein bL27 (88 aa).

The disordered stretch occupies residues 1–24 (MAHKKAGGSSRNGRDSAGQRRGVK).

Belongs to the bacterial ribosomal protein bL27 family.

The polypeptide is Large ribosomal subunit protein bL27 (Syntrophobacter fumaroxidans (strain DSM 10017 / MPOB)).